We begin with the raw amino-acid sequence, 274 residues long: Centromere protein K (274 aa).

Positions 1-21 are disordered; that stretch reads MSGYQHELPPNISKTSPAPEE. Residues 96–159 adopt a coiled-coil conformation; the sequence is KEELEKIAQE…NQLTAFSEKR (64 aa).

This sequence belongs to the CENP-K/MCM22 family.

Its subcellular location is the nucleus. It is found in the chromosome. The protein localises to the centromere. It localises to the kinetochore. Probable component of a centromeric complex involved in assembly of kinetochore proteins, mitotic progression and chromosome segregation. The chain is Centromere protein K (cenpk) from Xenopus laevis (African clawed frog).